The following is a 455-amino-acid chain: Ribosomal protein uS12 methylthiotransferase RimO (455 aa).

The MTTase N-terminal domain maps to 1-114 (MKYHIVTLGC…INALVGQLER (114 aa)). Residues Cys-10, Cys-46, Cys-78, Cys-166, Cys-170, and Cys-173 each contribute to the [4Fe-4S] cluster site. The region spanning 152–383 (THQTPSAYLK…MRLQQTISYT (232 aa)) is the Radical SAM core domain. Residues 386–455 (QRWVGRTIKV…AYDLWGEALS (70 aa)) form the TRAM domain.

It belongs to the methylthiotransferase family. RimO subfamily. Requires [4Fe-4S] cluster as cofactor.

Its subcellular location is the cytoplasm. The enzyme catalyses L-aspartate(89)-[ribosomal protein uS12]-hydrogen + (sulfur carrier)-SH + AH2 + 2 S-adenosyl-L-methionine = 3-methylsulfanyl-L-aspartate(89)-[ribosomal protein uS12]-hydrogen + (sulfur carrier)-H + 5'-deoxyadenosine + L-methionine + A + S-adenosyl-L-homocysteine + 2 H(+). Its function is as follows. Catalyzes the methylthiolation of an aspartic acid residue of ribosomal protein uS12. The protein is Ribosomal protein uS12 methylthiotransferase RimO of Chloroflexus aurantiacus (strain ATCC 29366 / DSM 635 / J-10-fl).